The primary structure comprises 215 residues: Ribose-5-phosphate isomerase A (215 aa).

Residues 26–29 (TGST), 79–82 (DGAD), and 92–95 (KGGG) each bind substrate. Glutamate 101 serves as the catalytic Proton acceptor. Lysine 119 lines the substrate pocket.

It belongs to the ribose 5-phosphate isomerase family. Homodimer.

The enzyme catalyses aldehydo-D-ribose 5-phosphate = D-ribulose 5-phosphate. It functions in the pathway carbohydrate degradation; pentose phosphate pathway; D-ribose 5-phosphate from D-ribulose 5-phosphate (non-oxidative stage): step 1/1. Its function is as follows. Catalyzes the reversible conversion of ribose-5-phosphate to ribulose 5-phosphate. The chain is Ribose-5-phosphate isomerase A from Xylella fastidiosa (strain 9a5c).